Here is a 335-residue protein sequence, read N- to C-terminus: tRNA-splicing endonuclease (335 aa).

Catalysis depends on residues Tyr-269, His-280, and Lys-311.

Belongs to the tRNA-intron endonuclease family. Archaeal long subfamily. As to quaternary structure, homodimer.

The enzyme catalyses pretRNA = a 3'-half-tRNA molecule with a 5'-OH end + a 5'-half-tRNA molecule with a 2',3'-cyclic phosphate end + an intron with a 2',3'-cyclic phosphate and a 5'-hydroxyl terminus.. In terms of biological role, endonuclease that removes tRNA introns. Cleaves pre-tRNA at the 5'- and 3'-splice sites to release the intron. The products are an intron and two tRNA half-molecules bearing 2',3' cyclic phosphate and 5'-OH termini. Recognizes a pseudosymmetric substrate in which 2 bulged loops of 3 bases are separated by a stem of 4 bp. This Haloarcula marismortui (strain ATCC 43049 / DSM 3752 / JCM 8966 / VKM B-1809) (Halobacterium marismortui) protein is tRNA-splicing endonuclease.